The following is a 418-amino-acid chain: MNIFEELKARGLVFQTTDEQALVKALTEGQVSYYTGYDPTADSLHLGHLVAILTSRRLQLAGHKPYALVGGATGLIGDPSFKDAERSLQTKETVLEWSDKIKGQLSTFLDFENGDNKAELVNNYDWFSQISFIDFLRDVGKYFTVNYMMSKDSVKKRIETGISYTEFAYQIMQGYDFYELNDKHNVTLQIGGSDQWGNMTAGTELLRKKADKTGHVMTVPLITDSTGKKFGKSEGNAVWLDADKTSPYEMYQFWLNVMDDDAVRFLKIFTFLFLDEIAEIETQFNAARHERLAQKTLAREVVTLVHGEEAYKQALNITEQLFAGNIKNLSANELKQGLSNVPNYHVQSEDSLNLVDMLVTAGISPSKRQAREDVQNGAIYINGDRVQDLDYQLSNDDKIDDQLTVIRRGKKKYAVLTY.

Tyr-34 contacts L-tyrosine. The 'HIGH' region motif lies at Pro-39–His-48. Residues Tyr-169 and Gln-173 each coordinate L-tyrosine. The 'KMSKS' region motif lies at Lys-229–Ser-233. Lys-232 contributes to the ATP binding site. Positions Leu-352–Tyr-418 constitute an S4 RNA-binding domain.

It belongs to the class-I aminoacyl-tRNA synthetase family. TyrS type 1 subfamily. In terms of assembly, homodimer.

It localises to the cytoplasm. It carries out the reaction tRNA(Tyr) + L-tyrosine + ATP = L-tyrosyl-tRNA(Tyr) + AMP + diphosphate + H(+). Functionally, catalyzes the attachment of tyrosine to tRNA(Tyr) in a two-step reaction: tyrosine is first activated by ATP to form Tyr-AMP and then transferred to the acceptor end of tRNA(Tyr). The polypeptide is Tyrosine--tRNA ligase (Streptococcus pyogenes serotype M28 (strain MGAS6180)).